Consider the following 337-residue polypeptide: Phenylalanine--tRNA ligase alpha subunit (337 aa).

A Mg(2+)-binding site is contributed by Glu258.

It belongs to the class-II aminoacyl-tRNA synthetase family. Phe-tRNA synthetase alpha subunit type 1 subfamily. In terms of assembly, tetramer of two alpha and two beta subunits. Requires Mg(2+) as cofactor.

Its subcellular location is the cytoplasm. It catalyses the reaction tRNA(Phe) + L-phenylalanine + ATP = L-phenylalanyl-tRNA(Phe) + AMP + diphosphate + H(+). This chain is Phenylalanine--tRNA ligase alpha subunit, found in Burkholderia vietnamiensis (strain G4 / LMG 22486) (Burkholderia cepacia (strain R1808)).